Here is a 1380-residue protein sequence, read N- to C-terminus: DNA-directed RNA polymerase subunit beta (1380 aa).

It belongs to the RNA polymerase beta chain family. The RNAP catalytic core consists of 2 alpha, 1 beta, 1 beta' and 1 omega subunit. When a sigma factor is associated with the core the holoenzyme is formed, which can initiate transcription.

The enzyme catalyses RNA(n) + a ribonucleoside 5'-triphosphate = RNA(n+1) + diphosphate. DNA-dependent RNA polymerase catalyzes the transcription of DNA into RNA using the four ribonucleoside triphosphates as substrates. In Sinorhizobium fredii (strain NBRC 101917 / NGR234), this protein is DNA-directed RNA polymerase subunit beta.